The following is a 185-amino-acid chain: Putative sulfur carrier protein YrkF (185 aa).

Cys-15 functions as the Cysteine persulfide intermediate in the catalytic mechanism. The region spanning 101–185 (SDESLNILDV…GMRDWTGKTE (85 aa)) is the Rhodanese domain.

This sequence belongs to the sulfur carrier protein TusA family.

In Bacillus subtilis (strain 168), this protein is Putative sulfur carrier protein YrkF (yrkF).